A 100-amino-acid polypeptide reads, in one-letter code: Urease subunit gamma (100 aa).

Belongs to the urease gamma subunit family. Heterotrimer of UreA (gamma), UreB (beta) and UreC (alpha) subunits. Three heterotrimers associate to form the active enzyme.

The protein resides in the cytoplasm. The catalysed reaction is urea + 2 H2O + H(+) = hydrogencarbonate + 2 NH4(+). Its pathway is nitrogen metabolism; urea degradation; CO(2) and NH(3) from urea (urease route): step 1/1. The protein is Urease subunit gamma of Teredinibacter turnerae (strain ATCC 39867 / T7901).